Here is a 127-residue protein sequence, read N- to C-terminus: Alpha-hordothionin (127 aa).

The signal sequence occupies residues 1 to 18 (MVCLLILGLVLEQVQVEG). 4 cysteine pairs are disulfide-bonded: C21–C57, C22–C49, C30–C47, and C34–C43. The propeptide at 64 to 127 (LALVSNSDEP…GDAGLTSLTA (64 aa)) is acidic domain.

Belongs to the plant thionin (TC 1.C.44) family. 4 C-C subfamily.

The protein resides in the secreted. Its function is as follows. Thionins are small plant proteins which are toxic to animal cells. They seem to exert their toxic effect at the level of the cell membrane. Their precise function is not known. In Hordeum vulgare (Barley), this protein is Alpha-hordothionin (THI1.1).